The chain runs to 340 residues: UDP-N-acetylglucosamine--N-acetylmuramyl-(pentapeptide) pyrophosphoryl-undecaprenol N-acetylglucosamine transferase (340 aa).

Residues 15–17 (TGG), N127, S184, I230, and Q275 contribute to the UDP-N-acetyl-alpha-D-glucosamine site.

It belongs to the glycosyltransferase 28 family. MurG subfamily.

It localises to the cell inner membrane. It carries out the reaction di-trans,octa-cis-undecaprenyl diphospho-N-acetyl-alpha-D-muramoyl-L-alanyl-D-glutamyl-meso-2,6-diaminopimeloyl-D-alanyl-D-alanine + UDP-N-acetyl-alpha-D-glucosamine = di-trans,octa-cis-undecaprenyl diphospho-[N-acetyl-alpha-D-glucosaminyl-(1-&gt;4)]-N-acetyl-alpha-D-muramoyl-L-alanyl-D-glutamyl-meso-2,6-diaminopimeloyl-D-alanyl-D-alanine + UDP + H(+). It functions in the pathway cell wall biogenesis; peptidoglycan biosynthesis. Cell wall formation. Catalyzes the transfer of a GlcNAc subunit on undecaprenyl-pyrophosphoryl-MurNAc-pentapeptide (lipid intermediate I) to form undecaprenyl-pyrophosphoryl-MurNAc-(pentapeptide)GlcNAc (lipid intermediate II). The chain is UDP-N-acetylglucosamine--N-acetylmuramyl-(pentapeptide) pyrophosphoryl-undecaprenol N-acetylglucosamine transferase from Vesicomyosocius okutanii subsp. Calyptogena okutanii (strain HA).